A 65-amino-acid chain; its full sequence is Chymotrypsin/elastase isoinhibitors 2 to 5 (65 aa).

Cystine bridges form between Cys4/Cys37, Cys13/Cys32, Cys16/Cys28, Cys20/Cys59, and Cys39/Cys53. The region spanning 4–59 is the TIL domain; the sequence is CGKNEVWTECTGCELKCGQDEKTPCALMCRPPSCECTPGRGMRRTHDGKCVPVSEC.

The protein belongs to the serine protease inhibitor-like (TIL domain-containing) family.

It localises to the secreted. In terms of biological role, defends the organism against the host's proteinases. The chain is Chymotrypsin/elastase isoinhibitors 2 to 5 from Ascaris suum (Pig roundworm).